Reading from the N-terminus, the 327-residue chain is Protein hunchback (327 aa).

3 C2H2-type zinc fingers span residues H1–H5, F11–H33, and Y39–H63. Disordered regions lie at residues K91–F121, P143–P170, and E182–S290. Composition is skewed to basic and acidic residues over residues T205–D216 and L265–D276. 2 C2H2-type zinc fingers span residues Y297 to H319 and F325 to C327.

Belongs to the hunchback C2H2-type zinc-finger protein family.

It is found in the nucleus. Functionally, gap class segmentation protein that controls development of head structures. The chain is Protein hunchback (hb) from Manduca sexta (Tobacco hawkmoth).